A 302-amino-acid chain; its full sequence is Negative regulator of the PHO system (302 aa).

A Protein kinase domain is found at 6-296 (FKQLEKLGNG…AKQALLHPWF (291 aa)). ATP contacts are provided by residues 12–20 (LGNGTYATV) and lysine 35. Aspartate 132 acts as the Proton acceptor in catalysis.

This sequence belongs to the protein kinase superfamily. CMGC Ser/Thr protein kinase family. CDC2/CDKX subfamily. In terms of assembly, interacts with a number of cyclins.

The catalysed reaction is L-seryl-[protein] + ATP = O-phospho-L-seryl-[protein] + ADP + H(+). It carries out the reaction L-threonyl-[protein] + ATP = O-phospho-L-threonyl-[protein] + ADP + H(+). When phosphate concentrations are high it phosphorylates the PHO4 transcription factor thus establishing repression. This Candida glabrata (strain ATCC 2001 / BCRC 20586 / JCM 3761 / NBRC 0622 / NRRL Y-65 / CBS 138) (Yeast) protein is Negative regulator of the PHO system (PHO85).